The primary structure comprises 467 residues: tRNA(Ile)-lysidine synthase (467 aa).

35 to 40 (SGGPDS) contacts ATP.

The protein belongs to the tRNA(Ile)-lysidine synthase family.

The protein resides in the cytoplasm. The enzyme catalyses cytidine(34) in tRNA(Ile2) + L-lysine + ATP = lysidine(34) in tRNA(Ile2) + AMP + diphosphate + H(+). Its function is as follows. Ligates lysine onto the cytidine present at position 34 of the AUA codon-specific tRNA(Ile) that contains the anticodon CAU, in an ATP-dependent manner. Cytidine is converted to lysidine, thus changing the amino acid specificity of the tRNA from methionine to isoleucine. This chain is tRNA(Ile)-lysidine synthase, found in Caldanaerobacter subterraneus subsp. tengcongensis (strain DSM 15242 / JCM 11007 / NBRC 100824 / MB4) (Thermoanaerobacter tengcongensis).